A 98-amino-acid chain; its full sequence is Feather keratin (98 aa).

Alanine 1 bears the N-acetylalanine mark.

The protein belongs to the avian keratin family. In terms of assembly, the avian keratins (F-ker, S-ker, C-ker and B-ker) are a complex mixture of very similar polypeptides.

The protein is Feather keratin of Chroicocephalus novaehollandiae (Silver gull).